Here is a 401-residue protein sequence, read N- to C-terminus: Phosphoglycerate kinase (401 aa).

Substrate-binding positions include 23 to 25, Arg-39, 62 to 65, Arg-121, and Arg-154; these read DFN and HLGR. ATP contacts are provided by residues Lys-207, Gly-298, Glu-329, and 355-358; that span reads GGDT.

It belongs to the phosphoglycerate kinase family. Monomer.

The protein localises to the cytoplasm. It carries out the reaction (2R)-3-phosphoglycerate + ATP = (2R)-3-phospho-glyceroyl phosphate + ADP. Its pathway is carbohydrate degradation; glycolysis; pyruvate from D-glyceraldehyde 3-phosphate: step 2/5. The sequence is that of Phosphoglycerate kinase from Campylobacter fetus subsp. fetus (strain 82-40).